A 184-amino-acid polypeptide reads, in one-letter code: ATP synthase subunit b, chloroplastic (184 aa).

Residues 31 to 49 traverse the membrane as a helical segment; sequence IINPSVVLSVLIYFGKGVL.

The protein belongs to the ATPase B chain family. In terms of assembly, F-type ATPases have 2 components, F(1) - the catalytic core - and F(0) - the membrane proton channel. F(1) has five subunits: alpha(3), beta(3), gamma(1), delta(1), epsilon(1). F(0) has four main subunits: a(1), b(1), b'(1) and c(10-14). The alpha and beta chains form an alternating ring which encloses part of the gamma chain. F(1) is attached to F(0) by a central stalk formed by the gamma and epsilon chains, while a peripheral stalk is formed by the delta, b and b' chains.

Its subcellular location is the plastid. The protein localises to the chloroplast thylakoid membrane. Its function is as follows. F(1)F(0) ATP synthase produces ATP from ADP in the presence of a proton or sodium gradient. F-type ATPases consist of two structural domains, F(1) containing the extramembraneous catalytic core and F(0) containing the membrane proton channel, linked together by a central stalk and a peripheral stalk. During catalysis, ATP synthesis in the catalytic domain of F(1) is coupled via a rotary mechanism of the central stalk subunits to proton translocation. In terms of biological role, component of the F(0) channel, it forms part of the peripheral stalk, linking F(1) to F(0). This Pinus koraiensis (Korean pine) protein is ATP synthase subunit b, chloroplastic.